Reading from the N-terminus, the 185-residue chain is Thymidine kinase (185 aa).

17 to 24 is an ATP binding site; sequence GPMFAGKT. Catalysis depends on E92, which acts as the Proton acceptor. A substrate-binding site is contributed by F121. Zn(2+) contacts are provided by C146 and C149. Substrate is bound at residue 166-170; that stretch reads LILAG. C179 and C182 together coordinate Zn(2+).

The protein belongs to the thymidine kinase family.

The enzyme catalyses thymidine + ATP = dTMP + ADP + H(+). Functionally, phosphorylates thymidine. ASFV replicates in the cytoplasm of infected cells and contains genes encoding a number of enzymes needed for DNA synthesis, including thymidine kinase. Important for growth in swine macrophages in vitro and is a virus virulence factor in swine. The chain is Thymidine kinase from African swine fever virus (isolate Pig/Kenya/KEN-50/1950) (ASFV).